Here is a 119-residue protein sequence, read N- to C-terminus: Large ribosomal subunit protein bL20 (119 aa).

Belongs to the bacterial ribosomal protein bL20 family.

Functionally, binds directly to 23S ribosomal RNA and is necessary for the in vitro assembly process of the 50S ribosomal subunit. It is not involved in the protein synthesizing functions of that subunit. This is Large ribosomal subunit protein bL20 from Teredinibacter turnerae (strain ATCC 39867 / T7901).